A 33-amino-acid chain; its full sequence is Photosystem II reaction center protein T (33 aa).

The helical transmembrane segment at Ala3–Phe23 threads the bilayer.

The protein belongs to the PsbT family. In terms of assembly, PSII is composed of 1 copy each of membrane proteins PsbA, PsbB, PsbC, PsbD, PsbE, PsbF, PsbH, PsbI, PsbJ, PsbK, PsbL, PsbM, PsbT, PsbY, PsbZ, Psb30/Ycf12, at least 3 peripheral proteins of the oxygen-evolving complex and a large number of cofactors. It forms dimeric complexes.

It is found in the plastid. The protein localises to the chloroplast thylakoid membrane. Found at the monomer-monomer interface of the photosystem II (PS II) dimer, plays a role in assembly and dimerization of PSII. PSII is a light-driven water plastoquinone oxidoreductase, using light energy to abstract electrons from H(2)O, generating a proton gradient subsequently used for ATP formation. This chain is Photosystem II reaction center protein T, found in Helianthus annuus (Common sunflower).